We begin with the raw amino-acid sequence, 538 residues long: Chaperonin GroEL (538 aa).

Residues T29–P32, D86–T90, G413, N476–A478, and D492 contribute to the ATP site.

This sequence belongs to the chaperonin (HSP60) family. As to quaternary structure, forms a cylinder of 14 subunits composed of two heptameric rings stacked back-to-back. Interacts with the co-chaperonin GroES.

It is found in the cytoplasm. It carries out the reaction ATP + H2O + a folded polypeptide = ADP + phosphate + an unfolded polypeptide.. Functionally, together with its co-chaperonin GroES, plays an essential role in assisting protein folding. The GroEL-GroES system forms a nano-cage that allows encapsulation of the non-native substrate proteins and provides a physical environment optimized to promote and accelerate protein folding. In Staphylococcus aureus (strain MRSA252), this protein is Chaperonin GroEL.